A 213-amino-acid polypeptide reads, in one-letter code: Probable inactive serine/threonine-protein kinase DDB_G0280559 (213 aa).

Residues 1 to 211 (MVLRYSYVFK…WNEIVNHSFF (211 aa)) form the Protein kinase domain.

This sequence belongs to the protein kinase superfamily. Ser/Thr protein kinase family.

The chain is Probable inactive serine/threonine-protein kinase DDB_G0280559 from Dictyostelium discoideum (Social amoeba).